The following is a 697-amino-acid chain: Pentatricopeptide repeat-containing protein At5g46460, mitochondrial (697 aa).

The N-terminal 36 residues, 1 to 36 (MWSRAIFQRFRFRAFSISHVIHGKCYRSFSVTVEFQ), are a transit peptide targeting the mitochondrion. PPR repeat units follow at residues 39-64 (EVLICNHLLSRRIDEAREVFNQVPSP), 65-95 (HVSLYTKMITGYTRSNRLVDALNLFDEMPVR), 96-130 (DVVSWNSMISGCVECGDMNTAVKLFDEMPERSVVS), 131-157 (WTAMVNGCFRSGKVDQAERLFYQMPVK), 158-192 (DTAAWNSMVHGYLQFGKVDDALKLFKQMPGKNVIS), 193-223 (WTTMICGLDQNERSGEALDLFKNMLRCCIKS), 224-258 (TSRPFTCVITACANAPAFHMGIQVHGLIIKLGFLY), 259-289 (EEYVSASLITFYANCKRIGDSRKVFDEKVHE), 290-324 (QVAVWTALLSGYSLNKKHEDALSIFSGMLRNSILP), 325-359 (NQSTFASGLNSCSALGTLDWGKEMHGVAVKLGLET), 360-390 (DAFVGNSLVVMYSDSGNVNDAVSVFIKIFKK), 391-425 (SIVSWNSIIVGCAQHGRGKWAFVIFGQMIRLNKEP), 426-456 (DEITFTGLLSACSHCGFLEKGRKLFYYMSSG), and 463-497 (KIQHYTCMVDILGRCGKLKEAEELIERMVVKPNEM). The interval 498–573 (VWLALLSACR…KPGSSWVVIR (76 aa)) is type E motif. The interval 574-602 (GKKHEFFSGDQPHCSRIYEKLEFLREKLK) is type E(+) motif. The tract at residues 603–697 (ELGYAPDYRS…NGTCSCGDYW (95 aa)) is type DYW motif.

It belongs to the PPR family. PCMP-H subfamily.

The protein resides in the mitochondrion. The protein is Pentatricopeptide repeat-containing protein At5g46460, mitochondrial (PCMP-H49) of Arabidopsis thaliana (Mouse-ear cress).